We begin with the raw amino-acid sequence, 215 residues long: Deoxyribose-phosphate aldolase (215 aa).

Asp89 serves as the catalytic Proton donor/acceptor. The active-site Schiff-base intermediate with acetaldehyde is Lys150. Lys174 acts as the Proton donor/acceptor in catalysis.

This sequence belongs to the DeoC/FbaB aldolase family. DeoC type 1 subfamily.

It is found in the cytoplasm. It carries out the reaction 2-deoxy-D-ribose 5-phosphate = D-glyceraldehyde 3-phosphate + acetaldehyde. The protein operates within carbohydrate degradation; 2-deoxy-D-ribose 1-phosphate degradation; D-glyceraldehyde 3-phosphate and acetaldehyde from 2-deoxy-alpha-D-ribose 1-phosphate: step 2/2. In terms of biological role, catalyzes a reversible aldol reaction between acetaldehyde and D-glyceraldehyde 3-phosphate to generate 2-deoxy-D-ribose 5-phosphate. The polypeptide is Deoxyribose-phosphate aldolase (Natronomonas pharaonis (strain ATCC 35678 / DSM 2160 / CIP 103997 / JCM 8858 / NBRC 14720 / NCIMB 2260 / Gabara) (Halobacterium pharaonis)).